Here is a 318-residue protein sequence, read N- to C-terminus: Porphobilinogen deaminase (318 aa).

Cys-241 carries the S-(dipyrrolylmethanemethyl)cysteine modification.

This sequence belongs to the HMBS family. As to quaternary structure, monomer. It depends on dipyrromethane as a cofactor.

The enzyme catalyses 4 porphobilinogen + H2O = hydroxymethylbilane + 4 NH4(+). It participates in porphyrin-containing compound metabolism; protoporphyrin-IX biosynthesis; coproporphyrinogen-III from 5-aminolevulinate: step 2/4. In terms of biological role, tetrapolymerization of the monopyrrole PBG into the hydroxymethylbilane pre-uroporphyrinogen in several discrete steps. The sequence is that of Porphobilinogen deaminase from Geobacter sp. (strain M21).